We begin with the raw amino-acid sequence, 98 residues long: Small ribosomal subunit protein bS20 (98 aa).

Residues His-76 to Ala-98 are disordered.

It belongs to the bacterial ribosomal protein bS20 family.

Binds directly to 16S ribosomal RNA. The protein is Small ribosomal subunit protein bS20 of Trichormus variabilis (strain ATCC 29413 / PCC 7937) (Anabaena variabilis).